The sequence spans 221 residues: Enolase-phosphatase E1 (221 aa).

Belongs to the HAD-like hydrolase superfamily. MasA/MtnC family. Monomer. The cofactor is Mg(2+).

The catalysed reaction is 5-methylsulfanyl-2,3-dioxopentyl phosphate + H2O = 1,2-dihydroxy-5-(methylsulfanyl)pent-1-en-3-one + phosphate. Its pathway is amino-acid biosynthesis; L-methionine biosynthesis via salvage pathway; L-methionine from S-methyl-5-thio-alpha-D-ribose 1-phosphate: step 3/6. It functions in the pathway amino-acid biosynthesis; L-methionine biosynthesis via salvage pathway; L-methionine from S-methyl-5-thio-alpha-D-ribose 1-phosphate: step 4/6. Functionally, bifunctional enzyme that catalyzes the enolization of 2,3-diketo-5-methylthiopentyl-1-phosphate (DK-MTP-1-P) into the intermediate 2-hydroxy-3-keto-5-methylthiopentenyl-1-phosphate (HK-MTPenyl-1-P), which is then dephosphorylated to form the acireductone 1,2-dihydroxy-3-keto-5-methylthiopentene (DHK-MTPene). The polypeptide is Enolase-phosphatase E1 (Hydrogenobaculum sp. (strain Y04AAS1)).